The primary structure comprises 210 residues: Large ribosomal subunit protein uL4 (210 aa).

A disordered region spans residues 56–80 (FVSGGGKKPWRQKGTGRARAGSTRS).

The protein belongs to the universal ribosomal protein uL4 family. Part of the 50S ribosomal subunit.

Functionally, one of the primary rRNA binding proteins, this protein initially binds near the 5'-end of the 23S rRNA. It is important during the early stages of 50S assembly. It makes multiple contacts with different domains of the 23S rRNA in the assembled 50S subunit and ribosome. Its function is as follows. Forms part of the polypeptide exit tunnel. This is Large ribosomal subunit protein uL4 from Solidesulfovibrio magneticus (strain ATCC 700980 / DSM 13731 / RS-1) (Desulfovibrio magneticus).